A 222-amino-acid chain; its full sequence is UPF0758 protein Ppha_0935 (222 aa).

Positions 100–222 (KIQAARDVFE…CFSFRESGLL (123 aa)) constitute an MPN domain. Zn(2+) contacts are provided by histidine 171, histidine 173, and aspartate 184. A JAMM motif motif is present at residues 171–184 (HNHPSGDVEPSNAD).

It belongs to the UPF0758 family.

The polypeptide is UPF0758 protein Ppha_0935 (Pelodictyon phaeoclathratiforme (strain DSM 5477 / BU-1)).